Here is a 502-residue protein sequence, read N- to C-terminus: Calnexin homolog (502 aa).

A signal peptide spans Met-1–Gly-19. The Lumenal portion of the chain corresponds to Thr-20 to Lys-481. Asn-25 and Asn-104 each carry an N-linked (GlcNAc...) asparagine glycan. Cysteines 125 and 161 form a disulfide. Residues Lys-131 and Asp-159 each coordinate an alpha-D-glucoside. Residues Ile-248 to Glu-381 are p domain (Extended arm). 5 repeat units span residues Asp-250–Asp-261, Asp-267–Glu-278, His-286–Ser-297, Asp-305–Glu-316, and Gly-320–Pro-330. 2 4 X approximate repeats regions span residues Asp-250 to Glu-316 and Gly-320 to Pro-377. Asn-296 is a glycosylation site (N-linked (GlcNAc...) asparagine). Cys-332 and Cys-338 are oxidised to a cystine. Tandem repeats lie at residues Gly-339–Ala-349, Gly-353–Pro-363, and Gly-367–Pro-377. Glu-398 is an an alpha-D-glucoside binding site. 2 N-linked (GlcNAc...) asparagine glycosylation sites follow: Asn-416 and Asn-425. The helical transmembrane segment at Phe-482–Thr-502 threads the bilayer.

This sequence belongs to the calreticulin family. In terms of assembly, interacts with MPD1.

It is found in the endoplasmic reticulum membrane. Interacts with newly synthesized monoglucosylated glycoproteins in the endoplasmic reticulum. It may act in assisting protein assembly and/or in the retention within the ER of unassembled protein subunits. It seems to play a major role in the quality control apparatus of the ER by the retention of incorrectly folded proteins. In Saccharomyces cerevisiae (strain ATCC 204508 / S288c) (Baker's yeast), this protein is Calnexin homolog (CNE1).